The chain runs to 570 residues: Glycine--tRNA ligase (570 aa).

2 residues coordinate substrate: Arg-99 and Glu-165. ATP contacts are provided by residues 197-199 (RNE), 207-212 (IRLREF), 324-325 (EC), and 443-446 (GIDR). 212–216 (FTQAE) contributes to the substrate binding site. Substrate is bound at residue 439–443 (EPSFG).

Belongs to the class-II aminoacyl-tRNA synthetase family.

It is found in the cytoplasm. The catalysed reaction is tRNA(Gly) + glycine + ATP = glycyl-tRNA(Gly) + AMP + diphosphate. Functionally, catalyzes the attachment of glycine to tRNA(Gly). In Pyrococcus horikoshii (strain ATCC 700860 / DSM 12428 / JCM 9974 / NBRC 100139 / OT-3), this protein is Glycine--tRNA ligase.